The primary structure comprises 271 residues: Putative two-component membrane permease complex subunit SMU_746c (271 aa).

2 helical membrane-spanning segments follow: residues 34-54 and 70-90; these read LAYI…TIWM and FFSP…PTVP.

It belongs to the UPF0703 family. As to quaternary structure, interacts with SMU_747c.

The protein localises to the cell membrane. In terms of biological role, could be part of a two-component membrane permease system responsible for amino acid transport under low pH. Involved in acidogenesis, biofilm formation and low-pH survival. The protein is Putative two-component membrane permease complex subunit SMU_746c of Streptococcus mutans serotype c (strain ATCC 700610 / UA159).